Reading from the N-terminus, the 431-residue chain is MLDINTIRQHPEEIISMLHNRQLASEEPKIEQLLNLDRERKGLVQRSDDLKALRNKVSKEIAEIKKSGIGSSGELILQMKSVSEEIAGMDTSLGHLEEEIETILLGLPNKLHPSVPVGRSADDNQIFKEPISFPYHLDFPLKNHLELGKSLRILDFERGAKVCGAGFPVYIGKGARLERALINFMLDCHTERHGYTEVFPPFFVNQESLRGTGQWPKFADQVYHMEEDDLYAIPTAEVPITNLHRGEMLDTKTLPISYAAYSACFRREAGSYGKDTRGFLRVHQFNKVEMVKFTRPEESYEALETIRENAEAILTALKIPYRVLLLCSGDISANATKCYDIEVWSPAEQKYLEASSCSNFEDYQARRANIRFKSESNAKPEFVHTLNGSGLATSRLMVSLLEHYQTAEGSIMVPEVLRHYTRFDEITQAAE.

235-237 (TAE) provides a ligand contact to L-serine. ATP-binding positions include 266–268 (RRE) and valine 282. L-serine is bound at residue glutamate 289. 353-356 (EASS) is a binding site for ATP. Residue serine 389 coordinates L-serine.

This sequence belongs to the class-II aminoacyl-tRNA synthetase family. Type-1 seryl-tRNA synthetase subfamily. In terms of assembly, homodimer. The tRNA molecule binds across the dimer.

The protein localises to the cytoplasm. It carries out the reaction tRNA(Ser) + L-serine + ATP = L-seryl-tRNA(Ser) + AMP + diphosphate + H(+). The enzyme catalyses tRNA(Sec) + L-serine + ATP = L-seryl-tRNA(Sec) + AMP + diphosphate + H(+). Its pathway is aminoacyl-tRNA biosynthesis; selenocysteinyl-tRNA(Sec) biosynthesis; L-seryl-tRNA(Sec) from L-serine and tRNA(Sec): step 1/1. In terms of biological role, catalyzes the attachment of serine to tRNA(Ser). Is also able to aminoacylate tRNA(Sec) with serine, to form the misacylated tRNA L-seryl-tRNA(Sec), which will be further converted into selenocysteinyl-tRNA(Sec). The chain is Serine--tRNA ligase from Pelodictyon phaeoclathratiforme (strain DSM 5477 / BU-1).